A 260-amino-acid polypeptide reads, in one-letter code: Glutathione S-transferase domain-containing protein DDB_G0274223 (260 aa).

The GST N-terminal domain occupies 7–96 (KVDYIFYTNN…YLAQKYNTFL (90 aa)). In terms of domain architecture, GST C-terminal spans 102–233 (NPHENSDVIT…GFKTFNPSAL (132 aa)).

Belongs to the GST superfamily.

In Dictyostelium discoideum (Social amoeba), this protein is Glutathione S-transferase domain-containing protein DDB_G0274223.